The chain runs to 1093 residues: Semaphorin 5c (1093 aa).

The first 34 residues, 1–34, serve as a signal peptide directing secretion; the sequence is MNMLILKLPKMFSQLWLLLILSLLTLEGPQPSTG. N48 carries N-linked (GlcNAc...) asparagine glycosylation. Positions 50–495 constitute a Sema domain; it reads SRYISYQDLM…TDLALTRIPA (446 aa). 2 disulfide bridges follow: C118-C128 and C146-C155. N162, N182, N285, and N295 each carry an N-linked (GlcNAc...) asparagine glycan. 2 disulfide bridges follow: C271–C376 and C296–C338. A glycan (N-linked (GlcNAc...) asparagine) is linked at N341. The PSI domain occupies 497–546; that stretch reads HCSRHVSQSSCLNSMDPYCGWNELVERCMPQPQDSSVLQHWHQAPQITCP. TSP type-1 domains are found at residues 553–605, 607–663, and 671–726; these read DGGW…TNCT, HGGW…PPCP, and DGGW…QSCQ. The N-linked (GlcNAc...) asparagine glycan is linked to N603. Disulfide bonds link C619–C656, C623–C662, C634–C646, C683–C720, C687–C725, and C698–C710. An N-linked (GlcNAc...) asparagine glycan is attached at N745. 3 consecutive TSP type-1 domains span residues 794–834, 850–901, and 904–953; these read DSAD…HACP, HGEW…VPCE, and LGWS…NECE. Intrachain disulfides connect C862–C895, C866–C900, and C877–C885. A helical transmembrane segment spans residues 960 to 980; that stretch reads TATLPIVIFVGLLFTVACCLA. N-linked (GlcNAc...) asparagine glycans are attached at residues N998 and N1046. Residues 1018-1056 form a disordered region; it reads PTKDYYDQRPKRQSSFRMPAKTSNLGNGNGTLNRNNMHQ. Residues 1041-1053 are compositionally biased toward low complexity; that stretch reads NLGNGNGTLNRNN.

The protein belongs to the semaphorin family. In egg chambers, high levels of expression in the follicle cells, with little to no expression in the germ cells (at protein level). In stage 3 to 7 egg chambers, planar polarized at the basal epithelial surface (at protein level).

It localises to the apical cell membrane. Its subcellular location is the lateral cell membrane. The protein localises to the endosome. Functionally, regulates the motility of migrating epithelial cells by providing guidance cues within the migratory environment and may also play a role in development of the olfactory system. May act as a positive axonal guidance cue. Function in neurons is essential for adult survival and is important for climbing behavior. Promotes collective migration of follicular epithelial cells in egg chambers, likely by acting at the leading edge of the basal epithelium cells to provide guidance cues across the cell boundary to the trailing edge of the cell ahead. The transmembrane receptor PlexA on the trailing edge of the cell ahead, appears to transduce this signal to suppress the formation of protrusions. Involved in olfactory avoidance behavior. The sequence is that of Semaphorin 5c from Drosophila melanogaster (Fruit fly).